Here is a 247-residue protein sequence, read N- to C-terminus: Uridylate kinase (247 aa).

11–14 (KASG) is an ATP binding site. An involved in allosteric activation by GTP region spans residues 19–24 (GKQGFG). Glycine 53 is a UMP binding site. Residues glycine 54 and arginine 58 each contribute to the ATP site. Residues aspartate 73 and 134–141 (TGNPFFTT) contribute to the UMP site. Threonine 161, glutamine 162, tyrosine 167, and aspartate 170 together coordinate ATP.

Belongs to the UMP kinase family. As to quaternary structure, homohexamer.

It localises to the cytoplasm. The enzyme catalyses UMP + ATP = UDP + ADP. It functions in the pathway pyrimidine metabolism; CTP biosynthesis via de novo pathway; UDP from UMP (UMPK route): step 1/1. With respect to regulation, allosterically activated by GTP. Inhibited by UTP. Its function is as follows. Catalyzes the reversible phosphorylation of UMP to UDP. In Chelativorans sp. (strain BNC1), this protein is Uridylate kinase.